We begin with the raw amino-acid sequence, 614 residues long: UvrABC system protein C (614 aa).

One can recognise a GIY-YIG domain in the interval 26 to 104 (NLPGVYKMLG…IKEHRPPYNV (79 aa)). A UVR domain is found at 215-250 (SDIHTTLIEKMEHSAEALDFEKAAFYRDQLSMLREV).

It belongs to the UvrC family. Interacts with UvrB in an incision complex.

The protein resides in the cytoplasm. Functionally, the UvrABC repair system catalyzes the recognition and processing of DNA lesions. UvrC both incises the 5' and 3' sides of the lesion. The N-terminal half is responsible for the 3' incision and the C-terminal half is responsible for the 5' incision. The protein is UvrABC system protein C of Psychrobacter sp. (strain PRwf-1).